We begin with the raw amino-acid sequence, 435 residues long: MKTFSLLRILIVLVGMAGAFATPAMALVEININKGNVEPMPIAIPDFLSANGIGAKISAVVEADLKRSGLFAPVNHGAFIDKQINPDQAPNMQNWTVLNAQALVVGRITQEGDGRLRAEFRLWDTYAGQQMSGQQFYTQPENWRRVAHIIADAIYERITGEKGYFDTRIVFVAESGTKTDRKRQLAIMDQDGENVRMLTNTANLVLTPRFSPNRQEVTYMSFEGNQPRVYLLQLETGQREVVGNFPGMTFSPRFSPDGQRVIMSLQQDANSNIYTMDLRSRTTTRLTSTAAIDTSPSYAPDGRRIVFESDRGGRQQLYVMNSDGSGQTRISFGEGSYSTPVWSPRGDLIAFTKQSGGKFSIGVMKPDGSGERLLTTGFHNEGPTWAPNGRVLMFFRQAAGSGGPQLYSIDLTGYNEQLVKTPSFASDPAWSPLLE.

Positions 1-26 are cleaved as a signal peptide; that stretch reads MKTFSLLRILIVLVGMAGAFATPAMA.

It belongs to the TolB family. As to quaternary structure, the Tol-Pal system is composed of five core proteins: the inner membrane proteins TolA, TolQ and TolR, the periplasmic protein TolB and the outer membrane protein Pal. They form a network linking the inner and outer membranes and the peptidoglycan layer.

Its subcellular location is the periplasm. In terms of biological role, part of the Tol-Pal system, which plays a role in outer membrane invagination during cell division and is important for maintaining outer membrane integrity. The sequence is that of Tol-Pal system protein TolB from Allorhizobium ampelinum (strain ATCC BAA-846 / DSM 112012 / S4) (Agrobacterium vitis (strain S4)).